The sequence spans 528 residues: Xylose import ATP-binding protein XylG (528 aa).

2 consecutive ABC transporter domains span residues 6-245 and 262-507; these read LQMN…VGRE and FEAR…LSHP. 38–45 lines the ATP pocket; sequence GENGAGKS. The interval 504–528 is disordered; that stretch reads LSHPGDPDSNDPANNNHNDNDRKTT.

This sequence belongs to the ABC transporter superfamily. Xylose importer (TC 3.A.1.2.4) family. The complex is composed of two ATP-binding proteins (XylG), two transmembrane proteins (XylH) and a solute-binding protein (XylF).

It localises to the cell inner membrane. The catalysed reaction is D-xylose(out) + ATP + H2O = D-xylose(in) + ADP + phosphate + H(+). In terms of biological role, part of the ABC transporter complex XylFGH involved in xylose import. Responsible for energy coupling to the transport system. In Pseudomonas syringae pv. tomato (strain ATCC BAA-871 / DC3000), this protein is Xylose import ATP-binding protein XylG.